A 326-amino-acid chain; its full sequence is tRNA dimethylallyltransferase (326 aa).

10–17 is a binding site for ATP; the sequence is GPTGTGKT. Residue 12–17 coordinates substrate; the sequence is TGTGKT. The tract at residues 35 to 38 is interaction with substrate tRNA; sequence DSMQ.

Belongs to the IPP transferase family. In terms of assembly, monomer. Mg(2+) serves as cofactor.

It carries out the reaction adenosine(37) in tRNA + dimethylallyl diphosphate = N(6)-dimethylallyladenosine(37) in tRNA + diphosphate. Its function is as follows. Catalyzes the transfer of a dimethylallyl group onto the adenine at position 37 in tRNAs that read codons beginning with uridine, leading to the formation of N6-(dimethylallyl)adenosine (i(6)A). This chain is tRNA dimethylallyltransferase, found in Dictyoglomus turgidum (strain DSM 6724 / Z-1310).